A 786-amino-acid chain; its full sequence is Signal transducer and activator of transcription 5B (786 aa).

Phosphotyrosine is present on Y90. Residue S128 is modified to Phosphoserine. The 98-residue stretch at 589–686 (WNDGAILGFV…EVYSKYYTPV (98 aa)) folds into the SH2 domain. Residues Y682 and Y699 each carry the phosphotyrosine modification.

It belongs to the transcription factor STAT family. As to quaternary structure, upon activation, forms a homodimer or a heterodimer with a related family member. Binds NR3C1. Interacts with NCOA1. Interacts with NMI. Interacts with SOCS7. Interacts (via SH2 domain) with INSR. Interacts with CPEB3; this inhibits STAT5B-mediated transcriptional activation. Tyrosine phosphorylated in response to signaling via activated KIT, resulting in translocation to the nucleus. Tyrosine phosphorylated in response to signaling via activated FLT3; wild-type FLT3 results in much weaker phosphorylation than constitutively activated mutant FLT3. Alternatively, can be phosphorylated by JAK2. Phosphorylation at Tyr-699 by PTK6 or HCK leads to an increase of its transcriptional activity.

The protein resides in the cytoplasm. It localises to the nucleus. Carries out a dual function: signal transduction and activation of transcription. Mediates cellular responses to the cytokine KITLG/SCF and other growth factors. Binds to the GAS element and activates PRL-induced transcription. Positively regulates hematopoietic/erythroid differentiation. The sequence is that of Signal transducer and activator of transcription 5B (Stat5b) from Rattus norvegicus (Rat).